The following is a 675-amino-acid chain: Potassium-transporting ATPase ATP-binding subunit (675 aa).

A run of 4 helical transmembrane segments spans residues 34-54 (IMFVVEVGMILTLILICFPDI), 65-85 (LITIFIILLITILFANFSEAF), 216-236 (IALFTLLTTLTIIFLVVIVTL), and 245-265 (LILPIAMLIALTVCLIPTTIG). Catalysis depends on aspartate 304, which acts as the 4-aspartylphosphate intermediate. ATP is bound by residues aspartate 341, glutamate 345, 372–379 (FTAETRMS), and lysine 390. The Mg(2+) site is built by aspartate 513 and aspartate 517. 3 helical membrane-spanning segments follow: residues 569 to 591 (ALTTFSLANDVAKYFAILPALMM), 611 to 631 (AIISALIFNALIIVALIPIAM), and 644 to 664 (IFINNMLIYGLGGLIVPFLGI).

The protein belongs to the cation transport ATPase (P-type) (TC 3.A.3) family. Type IA subfamily. As to quaternary structure, the system is composed of three essential subunits: KdpA, KdpB and KdpC.

It is found in the cell membrane. The catalysed reaction is K(+)(out) + ATP + H2O = K(+)(in) + ADP + phosphate + H(+). In terms of biological role, part of the high-affinity ATP-driven potassium transport (or Kdp) system, which catalyzes the hydrolysis of ATP coupled with the electrogenic transport of potassium into the cytoplasm. This subunit is responsible for energy coupling to the transport system and for the release of the potassium ions to the cytoplasm. In Staphylococcus aureus (strain MSSA476), this protein is Potassium-transporting ATPase ATP-binding subunit.